A 316-amino-acid polypeptide reads, in one-letter code: Pleckstrin homology domain-containing family F member 1 homolog (316 aa).

Residues 35-131 (VLVGEGVLTK…WMAHINKCVE (97 aa)) enclose the PH domain. The FYVE-type zinc finger occupies 152-212 (DTDASVCMHC…VCDACYERLK (61 aa)). 8 residues coordinate Zn(2+): C158, C161, C175, C178, C183, C186, C204, and C207. The tract at residues 215–316 (PSSLGSGEDS…AAVATTGSHC (102 aa)) is disordered. Residues 244 to 253 (SNDEDSDEET) show a composition bias toward acidic residues. Over residues 279-292 (SSTITSPSSATTGS) the composition is skewed to low complexity. Over residues 298-316 (VTPSVQSSPAAVATTGSHC) the composition is skewed to polar residues.

In terms of assembly, interacts with Gdi (Rab GDP dissociation inhibitor). In terms of tissue distribution, in ovaries, expressed both in the germ line cells and in the overlying somatic follicular epithelium.

Its subcellular location is the apical cell membrane. The protein resides in the endosome membrane. It is found in the cytoplasm. The protein localises to the cell cortex. In terms of biological role, functions in the regulation of endosome morphology and late endosome formation. Has a role in controlling trafficking from early to late endosomes and from late endosomes to lysosomes. Important for localization of Gdi to the endosomal membranes. May function in controlling the activity of multiple regulators in the endocytic pathway, perhaps by positively controlling those involved in the early steps of endocytosis such as Rab5 and hrs, and negative regulating those involved in the late stages of endocytosis like car and VhaSFD. The sequence is that of Pleckstrin homology domain-containing family F member 1 homolog from Drosophila melanogaster (Fruit fly).